Reading from the N-terminus, the 338-residue chain is Methionine synthase (338 aa).

Zn(2+) is bound by residues His211, Cys213, and Cys294.

Belongs to the archaeal MetE family. Requires Zn(2+) as cofactor.

The protein operates within amino-acid biosynthesis; L-methionine biosynthesis via de novo pathway. Its function is as follows. Catalyzes the transfer of a methyl group to L-homocysteine resulting in methionine formation. The physiological methyl donor is unknown. The chain is Methionine synthase from Sulfurisphaera tokodaii (strain DSM 16993 / JCM 10545 / NBRC 100140 / 7) (Sulfolobus tokodaii).